Consider the following 330-residue polypeptide: DNA-directed RNA polymerase I subunit RPA43 (330 aa).

Residues 251-330 (ADVTDVTPQE…ANFESPKKRQ (80 aa)) form a disordered region. Phosphoserine occurs at positions 306, 318, and 325. Residues 317-330 (HSEEANFESPKKRQ) show a composition bias toward basic and acidic residues.

It belongs to the eukaryotic RPA43 RNA polymerase subunit family. Component of the RNA polymerase I (Pol I) complex consisting of 13 subunits: a ten-subunit catalytic core composed of POLR1A/RPA1, POLR1B/RPA2, POLR1C/RPAC1, POLR1D/RPAC2, POLR1H/RPA12, POLR2E/RPABC1, POLR2F/RPABC2, POLR2H/RPABC3, POLR2K/RPABC4 and POLR2L/RPABC5; a mobile stalk subunit POLR1F/RPA43 protruding from the core and additional subunits homologous to general transcription factors POLR1E/RPA49 and POLR1G/RPA34. Interacts with RRN3/TIF-IA. Interacts with RRN3/TIF-IA. Widely expressed.

Its subcellular location is the nucleus. The protein resides in the nucleolus. In terms of biological role, component of RNA polymerase I (Pol I), a DNA-dependent RNA polymerase which synthesizes ribosomal RNA precursors using the four ribonucleoside triphosphates as substrates. Through its association with RRN3/TIF-IA may be involved in recruitment of Pol I to rDNA promoters. The protein is DNA-directed RNA polymerase I subunit RPA43 of Mus musculus (Mouse).